Here is a 101-residue protein sequence, read N- to C-terminus: Urease subunit gamma (101 aa).

It belongs to the urease gamma subunit family. In terms of assembly, heterotrimer of UreA (gamma), UreB (beta) and UreC (alpha) subunits. Three heterotrimers associate to form the active enzyme.

Its subcellular location is the cytoplasm. The enzyme catalyses urea + 2 H2O + H(+) = hydrogencarbonate + 2 NH4(+). The protein operates within nitrogen metabolism; urea degradation; CO(2) and NH(3) from urea (urease route): step 1/1. The polypeptide is Urease subunit gamma (Ureaplasma urealyticum serovar 10 (strain ATCC 33699 / Western)).